We begin with the raw amino-acid sequence, 513 residues long: Na(+)/H(+) antiporter NhaB (513 aa).

A run of 12 helical transmembrane segments spans residues 23-43 (LALIIFLIVNPLIFLISPFVA), 52-72 (IFTLAMALKCYPLLPGGLLAI), 97-117 (LLLMFMVAGIYFMKQLLLFIF), 120-140 (LLLSIRSKMLLSLSFCVAAAF), 144-164 (FLDALTVVAVVISVAVGFYGI), 202-222 (LMMHAGVGTALGGVMTMVGEP), 238-258 (FFLRMSPVTVPVLICGLLTCL), 303-323 (AIIGVWLVTALALHLAEVGLI), 348-368 (TESLPFTALLTVFFSVVAVII), 391-411 (LFYIFNGLLSSISDNVFVGTI), 447-467 (ATPNGQAAFLFLLTSALAPLI), and 475-495 (VWMALPYTLVLTLVGLLCVEF).

The protein belongs to the NhaB Na(+)/H(+) (TC 2.A.34) antiporter family.

It is found in the cell inner membrane. It carries out the reaction 2 Na(+)(in) + 3 H(+)(out) = 2 Na(+)(out) + 3 H(+)(in). Its function is as follows. Na(+)/H(+) antiporter that extrudes sodium in exchange for external protons. In Shigella boydii serotype 18 (strain CDC 3083-94 / BS512), this protein is Na(+)/H(+) antiporter NhaB.